Consider the following 334-residue polypeptide: Holliday junction branch migration complex subunit RuvB (334 aa).

Residues 4 to 184 form a large ATPase domain (RuvB-L) region; it reads ADRLVSAGVI…FGIVQRLEFY (181 aa). Residues Ile-23, Arg-24, Gly-65, Lys-68, Thr-69, Thr-70, 131–133, Arg-174, Tyr-184, and Arg-221 each bind ATP; that span reads EDY. Thr-69 is a binding site for Mg(2+). The tract at residues 185 to 255 is small ATPAse domain (RuvB-S); sequence RVEDLQHIVG…VASRALDMLS (71 aa). Residues 258–334 form a head domain (RuvB-H) region; the sequence is SEGFDYMDRK…YKHFGITREG (77 aa). Residues Arg-294, Arg-313, and Arg-318 each contribute to the DNA site.

It belongs to the RuvB family. As to quaternary structure, homohexamer. Forms an RuvA(8)-RuvB(12)-Holliday junction (HJ) complex. HJ DNA is sandwiched between 2 RuvA tetramers; dsDNA enters through RuvA and exits via RuvB. An RuvB hexamer assembles on each DNA strand where it exits the tetramer. Each RuvB hexamer is contacted by two RuvA subunits (via domain III) on 2 adjacent RuvB subunits; this complex drives branch migration. In the full resolvosome a probable DNA-RuvA(4)-RuvB(12)-RuvC(2) complex forms which resolves the HJ.

Its subcellular location is the cytoplasm. The catalysed reaction is ATP + H2O = ADP + phosphate + H(+). Its function is as follows. The RuvA-RuvB-RuvC complex processes Holliday junction (HJ) DNA during genetic recombination and DNA repair, while the RuvA-RuvB complex plays an important role in the rescue of blocked DNA replication forks via replication fork reversal (RFR). RuvA specifically binds to HJ cruciform DNA, conferring on it an open structure. The RuvB hexamer acts as an ATP-dependent pump, pulling dsDNA into and through the RuvAB complex. RuvB forms 2 homohexamers on either side of HJ DNA bound by 1 or 2 RuvA tetramers; 4 subunits per hexamer contact DNA at a time. Coordinated motions by a converter formed by DNA-disengaged RuvB subunits stimulates ATP hydrolysis and nucleotide exchange. Immobilization of the converter enables RuvB to convert the ATP-contained energy into a lever motion, pulling 2 nucleotides of DNA out of the RuvA tetramer per ATP hydrolyzed, thus driving DNA branch migration. The RuvB motors rotate together with the DNA substrate, which together with the progressing nucleotide cycle form the mechanistic basis for DNA recombination by continuous HJ branch migration. Branch migration allows RuvC to scan DNA until it finds its consensus sequence, where it cleaves and resolves cruciform DNA. The sequence is that of Holliday junction branch migration complex subunit RuvB from Erwinia tasmaniensis (strain DSM 17950 / CFBP 7177 / CIP 109463 / NCPPB 4357 / Et1/99).